Consider the following 401-residue polypeptide: Beta-ketoadipyl-CoA thiolase (401 aa).

The active-site Acyl-thioester intermediate is the Cys90. Residues His357 and Cys387 each act as proton acceptor in the active site.

This sequence belongs to the thiolase-like superfamily. Thiolase family.

It catalyses the reaction succinyl-CoA + acetyl-CoA = 3-oxoadipyl-CoA + CoA. The protein operates within aromatic compound metabolism; phenylacetate degradation. Functionally, catalyzes thiolytic cleavage of beta-ketoadipyl-CoA to succinyl-CoA and acetyl-CoA. In Escherichia coli, this protein is Beta-ketoadipyl-CoA thiolase (paaJ).